Reading from the N-terminus, the 126-residue chain is Aspartate 1-decarboxylase (126 aa).

Serine 25 acts as the Schiff-base intermediate with substrate; via pyruvic acid in catalysis. Residue serine 25 is modified to Pyruvic acid (Ser). Position 57 (threonine 57) interacts with substrate. The active-site Proton donor is the tyrosine 58. 73 to 75 is a binding site for substrate; it reads GAA.

The protein belongs to the PanD family. As to quaternary structure, heterooctamer of four alpha and four beta subunits. It depends on pyruvate as a cofactor. Is synthesized initially as an inactive proenzyme, which is activated by self-cleavage at a specific serine bond to produce a beta-subunit with a hydroxyl group at its C-terminus and an alpha-subunit with a pyruvoyl group at its N-terminus.

Its subcellular location is the cytoplasm. It catalyses the reaction L-aspartate + H(+) = beta-alanine + CO2. It functions in the pathway cofactor biosynthesis; (R)-pantothenate biosynthesis; beta-alanine from L-aspartate: step 1/1. Catalyzes the pyruvoyl-dependent decarboxylation of aspartate to produce beta-alanine. In Sodalis glossinidius (strain morsitans), this protein is Aspartate 1-decarboxylase.